The following is a 378-amino-acid chain: Aminotransferase apf4 (378 aa).

Arg-88 contributes to the pyridoxal 5'-phosphate binding site. Lys-189 is modified (N6-(pyridoxal phosphate)lysine). Glu-228 is a pyridoxal 5'-phosphate binding site. The tract at residues 359 to 378 is disordered; the sequence is ERGHNGQPTADPTRVIEMPE.

It belongs to the class-IV pyridoxal-phosphate-dependent aminotransferase family. It depends on pyridoxal 5'-phosphate as a cofactor.

It functions in the pathway secondary metabolite biosynthesis. Its function is as follows. Aminotransferase; part of the gene cluster that mediates the biosynthesis of the cyclic tetrapeptide apicidin F (APF). The non-ribosomal peptide synthetase apf1 incorporates four different amino acids to produce apicidin F: L-phenylalanine, D-pipecolic acid (D-pip), N-methoxy-L-tryptophan and L-2-aminooctanedioic acid. L-Phenylalanine is the only proteinogenic amino acid directly used by apf1. The 3 other apf1 substrates are non-proteinogenic and have to be modified by other enzymes of the cluster. Lysine is converted to delta-1-pyrroline-5-carboxylate (P5C) which is reduced to L-pipecolic acid (L-pip) by apf3. L-pip is epimerized to D-pip, probably by apf1 activity, prior to incorporation. L-Tryptophan is N-oxidyzed by one of the cytochrome P450 monooxygenases (apf7 or apf8), and further methylated at the hydroxy group by the O-methyltransferase apf6 to yield N-methoxy-L-tryptophan. The synthesis of the fourth apf1 substrate is more complex. The fatty acid synthase apf5 is involved in the synthesis of the octanoic acid backbone of L-2-aminooctanedioic acid by fixing one acetyl-CoA unit and three malonyl-CoA units. Then one of the cytochrome P450 monooxygenases (apf7 or apf8) may oxidize this backbone to 2-oxooctanoic acid. The aminotransferase apf4 is predicted to catalyze the exchange of the keto group with an amino group. The next step would be the oxidation of 2-aminooctanoic acid by one of the cytochrome P450 monooxygenases (apf7 or apf8). The last step is the oxidation of 2-amino-8-hydroxyoctanoic acid to 2-aminooctanedioic acid is catalyzed by the FAD-dependent monooxygenase apf9. This is Aminotransferase apf4 from Gibberella fujikuroi (strain CBS 195.34 / IMI 58289 / NRRL A-6831) (Bakanae and foot rot disease fungus).